The chain runs to 283 residues: Large ribosomal subunit protein mL46 (283 aa).

Lys-217 is modified (N6-succinyllysine). Lys-228 is modified (N6-acetyllysine). An N6-succinyllysine modification is found at Lys-246.

This sequence belongs to the mitochondrion-specific ribosomal protein mL46 family. As to quaternary structure, component of the mitochondrial ribosome large subunit (39S) which comprises a 16S rRNA and about 50 distinct proteins.

The protein localises to the mitochondrion. In Mus musculus (Mouse), this protein is Large ribosomal subunit protein mL46 (Mrpl46).